A 642-amino-acid chain; its full sequence is Threonine--tRNA ligase (642 aa).

Residues Met-1–Thr-65 form the TGS domain. The catalytic stretch occupies residues Asp-248 to Pro-541. Cys-342, His-393, and His-518 together coordinate Zn(2+).

It belongs to the class-II aminoacyl-tRNA synthetase family. As to quaternary structure, homodimer. The cofactor is Zn(2+).

It localises to the cytoplasm. It carries out the reaction tRNA(Thr) + L-threonine + ATP = L-threonyl-tRNA(Thr) + AMP + diphosphate + H(+). Functionally, catalyzes the attachment of threonine to tRNA(Thr) in a two-step reaction: L-threonine is first activated by ATP to form Thr-AMP and then transferred to the acceptor end of tRNA(Thr). Also edits incorrectly charged L-seryl-tRNA(Thr). This chain is Threonine--tRNA ligase, found in Myxococcus xanthus (strain DK1622).